A 115-amino-acid polypeptide reads, in one-letter code: Holo-[acyl-carrier-protein] synthase (115 aa).

Residues D6 and E51 each coordinate Mg(2+).

The protein belongs to the P-Pant transferase superfamily. AcpS family. Requires Mg(2+) as cofactor.

Its subcellular location is the cytoplasm. The enzyme catalyses apo-[ACP] + CoA = holo-[ACP] + adenosine 3',5'-bisphosphate + H(+). Transfers the 4'-phosphopantetheine moiety from coenzyme A to a Ser of acyl-carrier-protein. The chain is Holo-[acyl-carrier-protein] synthase from Campylobacter jejuni subsp. doylei (strain ATCC BAA-1458 / RM4099 / 269.97).